The sequence spans 84 residues: U4-theraphotoxin-Hhn1a (84 aa).

The signal sequence occupies residues 1–22 (MKVTLIAILTCAAVLVLHTTAA). Positions 23–47 (EELEESQLMEVGMPDTELEAVDEER) are excised as a propeptide. 3 cysteine pairs are disulfide-bonded: Cys51/Cys65, Cys55/Cys76, and Cys70/Cys81.

Belongs to the neurotoxin 12 (Hwtx-2) family. 02 (Hwtx-2) subfamily. In terms of tissue distribution, expressed by the venom gland.

It is found in the secreted. Postsynaptic neurotoxin. The sequence is that of U4-theraphotoxin-Hhn1a from Cyriopagopus hainanus (Chinese bird spider).